The primary structure comprises 123 residues: Large ribosomal subunit protein uL29 (123 aa).

It belongs to the universal ribosomal protein uL29 family.

This is Large ribosomal subunit protein uL29 (rpl-35) from Caenorhabditis elegans.